Consider the following 338-residue polypeptide: 3-phosphoshikimate 1-carboxyvinyltransferase 2 (338 aa).

Position 25 (R25) interacts with phosphoenolpyruvate. Residues S72, S73, Q74, S100, D225, and K252 each contribute to the 3-phosphoshikimate site. Q74 serves as a coordination point for phosphoenolpyruvate. The active-site Proton acceptor is the D225. 3 residues coordinate phosphoenolpyruvate: R256, R298, and K323.

This sequence belongs to the EPSP synthase family.

It is found in the plastid. It localises to the chloroplast. It catalyses the reaction 3-phosphoshikimate + phosphoenolpyruvate = 5-O-(1-carboxyvinyl)-3-phosphoshikimate + phosphate. The protein operates within metabolic intermediate biosynthesis; chorismate biosynthesis; chorismate from D-erythrose 4-phosphate and phosphoenolpyruvate: step 6/7. Functionally, catalyzes the transfer of the enolpyruvyl moiety of phosphoenolpyruvate (PEP) to the 5-hydroxyl of shikimate-3-phosphate (S3P) to produce enolpyruvyl shikimate-3-phosphate and inorganic phosphate. The polypeptide is 3-phosphoshikimate 1-carboxyvinyltransferase 2 (EPSPS-2) (Nicotiana tabacum (Common tobacco)).